We begin with the raw amino-acid sequence, 100 residues long: Small ribosomal subunit protein bS18c (100 aa).

The protein belongs to the bacterial ribosomal protein bS18 family. Part of the 30S ribosomal subunit.

The protein localises to the plastid. Its subcellular location is the chloroplast. In Pleurastrum terricola (Filamentous green alga), this protein is Small ribosomal subunit protein bS18c.